A 346-amino-acid polypeptide reads, in one-letter code: tRNA N6-adenosine threonylcarbamoyltransferase (346 aa).

2 residues coordinate Fe cation: histidine 111 and histidine 115. Substrate is bound by residues 134-138, aspartate 167, glycine 180, and asparagine 279; that span reads LVSGG. Aspartate 307 is a Fe cation binding site.

This sequence belongs to the KAE1 / TsaD family. Fe(2+) serves as cofactor.

It localises to the cytoplasm. It carries out the reaction L-threonylcarbamoyladenylate + adenosine(37) in tRNA = N(6)-L-threonylcarbamoyladenosine(37) in tRNA + AMP + H(+). In terms of biological role, required for the formation of a threonylcarbamoyl group on adenosine at position 37 (t(6)A37) in tRNAs that read codons beginning with adenine. Is involved in the transfer of the threonylcarbamoyl moiety of threonylcarbamoyl-AMP (TC-AMP) to the N6 group of A37, together with TsaE and TsaB. TsaD likely plays a direct catalytic role in this reaction. This chain is tRNA N6-adenosine threonylcarbamoyltransferase, found in Burkholderia lata (strain ATCC 17760 / DSM 23089 / LMG 22485 / NCIMB 9086 / R18194 / 383).